Here is a 349-residue protein sequence, read N- to C-terminus: Histidinol-phosphate aminotransferase 1 (349 aa).

N6-(pyridoxal phosphate)lysine is present on Lys213.

The protein belongs to the class-II pyridoxal-phosphate-dependent aminotransferase family. Histidinol-phosphate aminotransferase subfamily. Homodimer. It depends on pyridoxal 5'-phosphate as a cofactor.

The catalysed reaction is L-histidinol phosphate + 2-oxoglutarate = 3-(imidazol-4-yl)-2-oxopropyl phosphate + L-glutamate. The protein operates within amino-acid biosynthesis; L-histidine biosynthesis; L-histidine from 5-phospho-alpha-D-ribose 1-diphosphate: step 7/9. This chain is Histidinol-phosphate aminotransferase 1, found in Carboxydothermus hydrogenoformans (strain ATCC BAA-161 / DSM 6008 / Z-2901).